Consider the following 497-residue polypeptide: Acetyl-coenzyme A carboxylase carboxyl transferase subunit beta, chloroplastic (497 aa).

A CoA carboxyltransferase N-terminal domain is found at 225–497 (LWVQCENCYG…LHGFLPLNQD (273 aa)). Positions 229, 232, 248, and 251 each coordinate Zn(2+). Residues 229-251 (CENCYGLNYKKFFSSKMNICEYC) form a C4-type zinc finger.

This sequence belongs to the AccD/PCCB family. As to quaternary structure, acetyl-CoA carboxylase is a heterohexamer composed of biotin carboxyl carrier protein, biotin carboxylase and 2 subunits each of ACCase subunit alpha and ACCase plastid-coded subunit beta (accD). Requires Zn(2+) as cofactor.

It is found in the plastid. The protein resides in the chloroplast stroma. It carries out the reaction N(6)-carboxybiotinyl-L-lysyl-[protein] + acetyl-CoA = N(6)-biotinyl-L-lysyl-[protein] + malonyl-CoA. It functions in the pathway lipid metabolism; malonyl-CoA biosynthesis; malonyl-CoA from acetyl-CoA: step 1/1. Its function is as follows. Component of the acetyl coenzyme A carboxylase (ACC) complex. Biotin carboxylase (BC) catalyzes the carboxylation of biotin on its carrier protein (BCCP) and then the CO(2) group is transferred by the transcarboxylase to acetyl-CoA to form malonyl-CoA. This is Acetyl-coenzyme A carboxylase carboxyl transferase subunit beta, chloroplastic from Phalaenopsis aphrodite subsp. formosana (Moth orchid).